Consider the following 124-residue polypeptide: Large ribosomal subunit protein bL12 (124 aa).

Over residues 102–116 (MSKEDAEAAKTKLEE) the composition is skewed to basic and acidic residues. A disordered region spans residues 102–124 (MSKEDAEAAKTKLEEAGASVELK).

Belongs to the bacterial ribosomal protein bL12 family. As to quaternary structure, homodimer. Part of the ribosomal stalk of the 50S ribosomal subunit. Forms a multimeric L10(L12)X complex, where L10 forms an elongated spine to which 2 to 4 L12 dimers bind in a sequential fashion. Binds GTP-bound translation factors.

Functionally, forms part of the ribosomal stalk which helps the ribosome interact with GTP-bound translation factors. Is thus essential for accurate translation. The protein is Large ribosomal subunit protein bL12 of Chromohalobacter salexigens (strain ATCC BAA-138 / DSM 3043 / CIP 106854 / NCIMB 13768 / 1H11).